The sequence spans 445 residues: MTKKYFGTDGIRGRVGEFPITPDFMLKLGWAAGMAFRSMGACRVLVGKDTRISGYMFESALEAGLSAAGADVMLLGPMPTPAIAYLTRTFHAEAGIVISASHNPHDDNGIKFFSGEGTKLPDEVELMIEELLDAPMTVVESSKLGKVSRINDASGRYIEFCKSSVPSSTSFAGLKVVLDCAHGATYKVAPSVFRELGAQVTVLSAQPNGLNINENCGSTHMSQLQAAVLAEHADLGIAFDGDGDRVLMVDQTGAIVDGDELLFIIARDLHERDKLQGGVVGTLMSNLGLELALADLGIPFVRANVGDRYVIAELLERNWLVGGENSGHIVCFRHATTGDAIIAALQVLMALKARGESLAQSRQGLRKCPQVLVNVRFGGGENPVEHPAVKEACERVTAAMAGRGRVLLRKSGTEPLVRVMVEGDDEAQVRAYAEELAKLVAEVSA.

S101 acts as the Phosphoserine intermediate in catalysis. Mg(2+) is bound by residues S101, D240, D242, and D244. S101 is subject to Phosphoserine.

Belongs to the phosphohexose mutase family. Requires Mg(2+) as cofactor. Post-translationally, activated by phosphorylation.

The catalysed reaction is alpha-D-glucosamine 1-phosphate = D-glucosamine 6-phosphate. Catalyzes the conversion of glucosamine-6-phosphate to glucosamine-1-phosphate. The chain is Phosphoglucosamine mutase from Pseudomonas fluorescens (strain ATCC BAA-477 / NRRL B-23932 / Pf-5).